The chain runs to 846 residues: Aminopeptidase N (846 aa).

Substrate contacts are provided by residues E120 and 252–256; that span reads GAMEN. A Zn(2+)-binding site is contributed by H288. The Proton acceptor role is filled by E289. Positions 292 and 311 each coordinate Zn(2+).

Belongs to the peptidase M1 family. Monomer. Requires Zn(2+) as cofactor.

It is found in the cytoplasm. It catalyses the reaction Release of an N-terminal amino acid, Xaa-|-Yaa- from a peptide, amide or arylamide. Xaa is preferably Ala, but may be most amino acids including Pro (slow action). When a terminal hydrophobic residue is followed by a prolyl residue, the two may be released as an intact Xaa-Pro dipeptide.. Aminopeptidase with broad substrate specificity to several peptides. It has more affinity for oligopeptides than for dipeptides. It plays an essential role in the metabolism, it may be involved in nitrogen supply or protein turnover. The protein is Aminopeptidase N (pepN) of Lactococcus lactis subsp. lactis (strain IL1403) (Streptococcus lactis).